A 246-amino-acid polypeptide reads, in one-letter code: Ribonuclease 3 (246 aa).

Residues 18–147 (FQELQKKIGI…FIGALYLDQG (130 aa)) form the RNase III domain. Mg(2+) is bound at residue Glu-60. The active site involves Asp-64. Mg(2+) is bound by residues Asp-133 and Glu-136. Residue Glu-136 is part of the active site. The DRBM domain occupies 173–242 (DFKSQLQELV…AQMALETLRA (70 aa)).

The protein belongs to the ribonuclease III family. Homodimer. Requires Mg(2+) as cofactor.

It localises to the cytoplasm. It catalyses the reaction Endonucleolytic cleavage to 5'-phosphomonoester.. Digests double-stranded RNA. Involved in the processing of primary rRNA transcript to yield the immediate precursors to the large and small rRNAs (23S and 16S). Processes some mRNAs, and tRNAs when they are encoded in the rRNA operon. Processes pre-crRNA and tracrRNA of type II CRISPR loci if present in the organism. The sequence is that of Ribonuclease 3 from Geobacillus thermodenitrificans (strain NG80-2).